The following is a 208-amino-acid chain: High frequency lysogenization protein HflD homolog (208 aa).

This sequence belongs to the HflD family.

It is found in the cytoplasm. The protein localises to the cell inner membrane. This chain is High frequency lysogenization protein HflD homolog, found in Pseudomonas entomophila (strain L48).